Reading from the N-terminus, the 146-residue chain is Angiogenin (146 aa).

An N-terminal signal peptide occupies residues Met1–Ala24. Position 25 is a pyrrolidone carboxylic acid (Gln25). The Proton acceptor role is filled by His37. Arg45 provides a ligand contact to tRNA. 3 disulfide bridges follow: Cys50-Cys105, Cys63-Cys116, and Cys81-Cys131. A Nucleolar localization signal motif is present at residues Arg55–Leu59. 2 residues coordinate tRNA: Cys105 and Ile127. His138 (proton donor) is an active-site residue.

It belongs to the pancreatic ribonuclease family. In terms of assembly, homodimer. Interacts with RNH1; inhibiting ANG ribonuclease activity. Interacts with PCNA.

The protein localises to the secreted. Its subcellular location is the nucleus. It is found in the nucleolus. It localises to the cytoplasm. The protein resides in the stress granule. With respect to regulation, has weak tRNA ribonuclease activity by itself due to partial autoinhibition by its C-terminus, which folds into a short alpha-helix that partially occludes the substrate-binding site. In absence of stress, the ribonuclease activity is inhibited by RNH1 in the cytoplasm. In response to stress, dissociates from RNH1 in the cytoplasm and associates with cytoplasmic ribosomes with vacant A-sites: ribosomes directly activate the tRNA ribonuclease activity of ANG by refolding the C-terminal alpha-helix. In response to stress, the angiogenic activity of ANG is inhibited by RNH1 in the nucleus. In terms of biological role, secreted ribonuclease that can either promote or restrict cell proliferation of target cells, depending on the context. Endocytosed in target cells via its receptor PLXNB2 and translocates to the cytoplasm or nucleus. Under stress conditions, localizes to the cytoplasm and promotes the assembly of stress granules (SGs): specifically cleaves a subset of tRNAs within anticodon loops to produce tRNA-derived stress-induced fragments (tiRNAs), resulting in translation repression and inhibition of cell proliferation. tiRNas also prevent formation of apoptosome, thereby promoting cell survival. Preferentially cleaves RNAs between a pyrimidine and an adenosine residue, suggesting that it cleaves the anticodon loop of tRNA(Ala) (32-UUAGCAU-38) after positions 33 and 36. Cleaves a subset of tRNAs, including tRNA(Ala), tRNA(Glu), tRNA(Gly), tRNA(Lys), tRNA(Val), tRNA(His), tRNA(Asp) and tRNA(Sec). Under growth conditions and in differentiated cells, translocates to the nucleus and stimulates ribosomal RNA (rRNA) transcription, including that containing the initiation site sequences of 45S rRNA, thereby promoting cell growth and proliferation. Angiogenin induces vascularization of normal and malignant tissues via its ability to promote rRNA transcription. Involved in hematopoietic stem and progenitor cell (HSPC) growth and survival by promoting rRNA transcription in growth conditions and inhibiting translation in response to stress, respectively. Mediates the crosstalk between myeloid and intestinal epithelial cells to protect the intestinal epithelial barrier integrity: secreted by myeloid cells and promotes intestinal epithelial cells proliferation and survival. Also mediates osteoclast-endothelial cell crosstalk in growing bone: produced by osteoclasts and protects the neighboring vascular cells against senescence by promoting rRNA transcription. The protein is Angiogenin (ANG) of Trachypithecus francoisi (Francois' leaf monkey).